Here is an 83-residue protein sequence, read N- to C-terminus: Alpha-neurotoxin NTX-1 (83 aa).

The signal sequence occupies residues 1–21; it reads MKTLLLTLLVVTIVCLDLGYT. 4 cysteine pairs are disulfide-bonded: C24/C45, C38/C62, C64/C75, and C76/C81.

It belongs to the three-finger toxin family. Short-chain subfamily. Type I alpha-neurotoxin sub-subfamily. In terms of tissue distribution, expressed by the venom gland.

The protein resides in the secreted. Binds to muscle nicotinic acetylcholine receptor (nAChR) and inhibit acetylcholine from binding to the receptor, thereby impairing neuromuscular transmission. The protein is Alpha-neurotoxin NTX-1 of Naja sputatrix (Malayan spitting cobra).